The sequence spans 360 residues: Peptide chain release factor 1 (360 aa).

Residue glutamine 237 is modified to N5-methylglutamine.

This sequence belongs to the prokaryotic/mitochondrial release factor family. Post-translationally, methylated by PrmC. Methylation increases the termination efficiency of RF1.

The protein resides in the cytoplasm. Peptide chain release factor 1 directs the termination of translation in response to the peptide chain termination codons UAG and UAA. The chain is Peptide chain release factor 1 from Stutzerimonas stutzeri (strain A1501) (Pseudomonas stutzeri).